The chain runs to 57 residues: DNA-directed RNA polymerase subunit Rpo6 (57 aa).

Belongs to the archaeal Rpo6/eukaryotic RPB6 RNA polymerase subunit family. Part of the RNA polymerase complex.

The protein localises to the cytoplasm. The catalysed reaction is RNA(n) + a ribonucleoside 5'-triphosphate = RNA(n+1) + diphosphate. Its function is as follows. DNA-dependent RNA polymerase (RNAP) catalyzes the transcription of DNA into RNA using the four ribonucleoside triphosphates as substrates. This chain is DNA-directed RNA polymerase subunit Rpo6, found in Thermococcus onnurineus (strain NA1).